We begin with the raw amino-acid sequence, 41 residues long: Large ribosomal subunit protein bL36 (41 aa).

Belongs to the bacterial ribosomal protein bL36 family.

This chain is Large ribosomal subunit protein bL36, found in Ruegeria pomeroyi (strain ATCC 700808 / DSM 15171 / DSS-3) (Silicibacter pomeroyi).